A 1816-amino-acid polypeptide reads, in one-letter code: Kinesin-like protein KIF1B (1816 aa).

Position 2 is an N-acetylserine (serine 2). A Kinesin motor domain is found at 5–354 (SVKVAVRVRP…LRYADRAKQI (350 aa)). 97 to 104 (GQTGAGKS) contacts ATP. Residues 270 to 350 (NINKSLTTLG…TLSTLRYADR (81 aa)) are interaction with KIFBP. The stretch at 365–386 (NAKLVRELKEEVTRLKDLLRAQ) forms a coiled coil. The disordered stretch occupies residues 431 to 450 (FSTASMGSLTSSPSSCSLSS). The segment covering 432 to 450 (STASMGSLTSSPSSCSLSS) has biased composition (low complexity). Positions 470-502 (GEEAIERLKESEKIIAELNETWEEKLRKTEAIR) form a coiled coil. The FHA domain occupies 556-612 (TRVGQADAERRQDIVLSGAHIKEEHCIFRSERSNSGEVIVTLEPCERSETYVNGKRV). 2 positions are modified to phosphothreonine: threonine 647 and threonine 652. Phosphoserine is present on residues glutamine 663 and glutamate 665. 2 coiled-coil regions span residues 668-737 (EKQG…EEEV) and 841-869 (SLEK…AQDE). Residues serine 1054 and serine 1057 each carry the phosphoserine modification. Position 1075 is a phosphothreonine (threonine 1075). 4 positions are modified to phosphoserine: asparagine 1141, serine 1416, serine 1454, and serine 1487. The interval 1550-1570 (STTTFESAITPSESSGYDSGD) is disordered. Residues 1554-1566 (FESAITPSESSGY) show a composition bias toward polar residues. Serine 1573, serine 1603, serine 1610, and serine 1613 each carry phosphoserine. Positions 1617–1660 (RDPSESSFSSATLTPSSTCPSLVDSRSNSLDQKTPEANSRASSP) are disordered. The span at 1621-1634 (ESSFSSATLTPSST) shows a compositional bias: low complexity. The segment covering 1640–1658 (DSRSNSLDQKTPEANSRAS) has biased composition (polar residues). The PH domain occupies 1702 to 1799 (VSKKGYLHFK…WLYAFNPLLA (98 aa)).

This sequence belongs to the TRAFAC class myosin-kinesin ATPase superfamily. Kinesin family. Unc-104 subfamily. In terms of assembly, monomer. Interacts with KIFBP; positively regulates KIF1B microtubule motor activity. Interacts (via C-terminus end of the kinesin-motor domain) with CHP1; the interaction occurs in a calcium-dependent manner. As to quaternary structure, interacts with MADD (via death domain); links this isoform to Rab3-carrying vesicles in anterograde synaptic vesicle transport. As to expression, isoform 3 is abundant in the skeletal muscle. It is also expressed in fetal brain, lung and kidney, and adult heart, placenta, testis, ovary and small intestine. Isoform 2 is abundant in the brain and also expressed in fetal heart, lung, liver and kidney, and adult skeletal muscle, placenta, liver, kidney, heart, spleen, thymus, prostate, testis, ovary, small intestine, colon and pancreas.

Its subcellular location is the cytoplasm. It is found in the cytoskeleton. The protein resides in the cytoplasmic vesicle. The protein localises to the secretory vesicle. It localises to the synaptic vesicle membrane. Its subcellular location is the mitochondrion. It catalyses the reaction ATP + H2O + a kinesin associated with a microtubule at position (n) = ADP + phosphate a kinesin associated with a microtubule at position (n+1, toward the plus end).. Its function is as follows. Has a plus-end-directed microtubule motor activity and functions as a motor for transport of vesicles and organelles along microtubules. Functionally, has a plus-end-directed microtubule motor activity and functions as a motor for anterograde synaptic vesicle transport along axonal microtubules from the cell body to the presynapse in neuronal cells. Functions as a downstream effector in a developmental apoptotic pathway that is activated when nerve growth factor (NGF) becomes limiting for neuronal progenitor cells. Has a plus-end-directed microtubule motor activity and functions as a motor for anterograde transport of mitochondria. This chain is Kinesin-like protein KIF1B, found in Homo sapiens (Human).